A 132-amino-acid polypeptide reads, in one-letter code: Small ribosomal subunit protein uS8 (132 aa).

It belongs to the universal ribosomal protein uS8 family. As to quaternary structure, part of the 30S ribosomal subunit. Contacts proteins S5 and S12.

Functionally, one of the primary rRNA binding proteins, it binds directly to 16S rRNA central domain where it helps coordinate assembly of the platform of the 30S subunit. This Bradyrhizobium sp. (strain BTAi1 / ATCC BAA-1182) protein is Small ribosomal subunit protein uS8.